Consider the following 998-residue polypeptide: Kinesin-like protein KIF19 (998 aa).

The region spanning 11-346 is the Kinesin motor domain; it reads QLMVALRVRP…LTYAGRAKNI (336 aa). 104-111 is an ATP binding site; that stretch reads GPTGCGKT. Coiled-coil stretches lie at residues 360-391 and 424-452; these read HIAQ…RGQA and EQLA…EVQI. A compositionally biased stretch (basic and acidic residues) spans 482–494; that stretch reads ECYAKDDSEKDSD. The interval 482 to 503 is disordered; sequence ECYAKDDSEKDSDTGDDQPDIL. A coiled-coil region spans residues 507–552; sequence EVAAARESIAALVDEQKQLRKQKLALEQRCRELRARGRRLEETLPR. Composition is skewed to polar residues over residues 662 to 676, 684 to 697, 746 to 761, and 836 to 852; these read SSLP…SLTP, KTLS…QNSA, SLGS…SENL, and TLQH…STGE. Disordered regions lie at residues 662-706, 746-765, 794-911, and 948-998; these read SSLP…TESE, SLGS…SEIP, GTEG…THLL, and KLPP…SRHN. A compositionally biased stretch (basic and acidic residues) spans 989–998; sequence HGKDGCSRHN.

The protein belongs to the TRAFAC class myosin-kinesin ATPase superfamily. Kinesin family.

Its subcellular location is the cytoplasm. It localises to the cytoskeleton. The protein localises to the cell projection. It is found in the cilium. Functionally, plus end-directed microtubule-dependent motor protein that regulates the length of motile cilia by mediating depolymerization of microtubules at ciliary tips. The polypeptide is Kinesin-like protein KIF19 (KIF19) (Homo sapiens (Human)).